Here is a 264-residue protein sequence, read N- to C-terminus: Glutamate racemase (264 aa).

Substrate contacts are provided by residues 10 to 11 (DS) and 42 to 43 (YG). The active-site Proton donor/acceptor is C73. A substrate-binding site is contributed by 74–75 (NT). The Proton donor/acceptor role is filled by C183. Substrate is bound at residue 184–185 (TH).

This sequence belongs to the aspartate/glutamate racemases family.

It carries out the reaction L-glutamate = D-glutamate. Its pathway is cell wall biogenesis; peptidoglycan biosynthesis. Functionally, provides the (R)-glutamate required for cell wall biosynthesis. This is Glutamate racemase from Streptococcus uberis (strain ATCC BAA-854 / 0140J).